We begin with the raw amino-acid sequence, 121 residues long: Small ribosomal subunit protein eS24 (121 aa).

It belongs to the eukaryotic ribosomal protein eS24 family.

This chain is Small ribosomal subunit protein eS24, found in Pyrobaculum arsenaticum (strain DSM 13514 / JCM 11321 / PZ6).